The sequence spans 160 residues: MSEEKTYPMTAEGRDKLQLELEDLIANQRPEITKRIQIARSYGDLSENSEYQSAKDEQAFVEGRIQTLKNMIDNAEIIDSNATAKDEVSLGKTVTFKELPNEEPETYAIVGSVEADPLAGKISNESPMANALIGKKVGETVAVPLPNGISIDVEIINVTK.

Residues 49–77 (SEYQSAKDEQAFVEGRIQTLKNMIDNAEI) adopt a coiled-coil conformation.

This sequence belongs to the GreA/GreB family.

Functionally, necessary for efficient RNA polymerase transcription elongation past template-encoded arresting sites. The arresting sites in DNA have the property of trapping a certain fraction of elongating RNA polymerases that pass through, resulting in locked ternary complexes. Cleavage of the nascent transcript by cleavage factors such as GreA or GreB allows the resumption of elongation from the new 3'terminus. GreA releases sequences of 2 to 3 nucleotides. This is Transcription elongation factor GreA from Leuconostoc mesenteroides subsp. mesenteroides (strain ATCC 8293 / DSM 20343 / BCRC 11652 / CCM 1803 / JCM 6124 / NCDO 523 / NBRC 100496 / NCIMB 8023 / NCTC 12954 / NRRL B-1118 / 37Y).